The following is a 402-amino-acid chain: MARTDQKPPCRGGCWGQPGHPNTGGAAAHPTYHPMGHRPRTCILLRGDQTTGGQAPSREISLGPWAAGTHFLAISTTPWGRKTPACISELPTSSGTAQPLANAVCEVQTVPGPGLRPQGTPAMRAPSHKGTPPTPNPWGPEQPQNRHKHPKKGVTGGPSPPPPAASRYGQTPGREPRVQAPGLGPCGRPASGRLLSLHLEKGDGKGTRQRIPLTDAAVGGDRTDIPSAIAAGPARTPDRHGLPIPGSTPTPMVGSGRLGAPVGRSGGGASARSSRPSCANVLLRADASLGTVLSVLWTGQLSRGWALLPPGDAGRHLETSVISAGVAAGIWLVEPGEAAQDPATRRTAPPRRTASPEPPAPGAPLPACPGRIPGAARFGPRSCPLGSPAVLAVTTGWSHRSV.

3 disordered regions span residues 1–29, 109–255, and 337–371; these read MART…AAAH, TVPG…MVGS, and EAAQ…CPGR. A compositionally biased stretch (low complexity) spans 345–355; the sequence is RRTAPPRRTAS. The span at 356–367 shows a compositional bias: pro residues; sequence PEPPAPGAPLPA.

The sequence is that of Proline-rich protein 25 (PRR25) from Homo sapiens (Human).